Reading from the N-terminus, the 430-residue chain is Tol-Pal system protein TolB (430 aa).

The N-terminal stretch at 1-21 is a signal peptide; it reads MKQALRVAFGFLILWASVLHA.

Belongs to the TolB family. In terms of assembly, the Tol-Pal system is composed of five core proteins: the inner membrane proteins TolA, TolQ and TolR, the periplasmic protein TolB and the outer membrane protein Pal. They form a network linking the inner and outer membranes and the peptidoglycan layer.

The protein resides in the periplasm. In terms of biological role, part of the Tol-Pal system, which plays a role in outer membrane invagination during cell division and is important for maintaining outer membrane integrity. TolB occupies a key intermediary position in the Tol-Pal system because it communicates directly with both membrane-embedded components, Pal in the outer membrane and TolA in the inner membrane. The polypeptide is Tol-Pal system protein TolB (Escherichia coli O139:H28 (strain E24377A / ETEC)).